The following is a 195-amino-acid chain: Peptidyl-tRNA hydrolase (195 aa).

TRNA is bound at residue Tyr-18. Catalysis depends on His-23, which acts as the Proton acceptor. 3 residues coordinate tRNA: Phe-69, Asn-71, and Asn-117.

This sequence belongs to the PTH family. In terms of assembly, monomer.

It localises to the cytoplasm. It catalyses the reaction an N-acyl-L-alpha-aminoacyl-tRNA + H2O = an N-acyl-L-amino acid + a tRNA + H(+). In terms of biological role, hydrolyzes ribosome-free peptidyl-tRNAs (with 1 or more amino acids incorporated), which drop off the ribosome during protein synthesis, or as a result of ribosome stalling. Functionally, catalyzes the release of premature peptidyl moieties from peptidyl-tRNA molecules trapped in stalled 50S ribosomal subunits, and thus maintains levels of free tRNAs and 50S ribosomes. This is Peptidyl-tRNA hydrolase from Alcanivorax borkumensis (strain ATCC 700651 / DSM 11573 / NCIMB 13689 / SK2).